The chain runs to 334 residues: Malate dehydrogenase, cytoplasmic (334 aa).

Position 11–17 (11–17) interacts with NAD(+); it reads GAAGQIA. Arginine 92 and arginine 98 together coordinate substrate. Residues asparagine 105, glutamine 112, and 129-131 each bind NAD(+); that span reads VGN. Asparagine 131 and arginine 162 together coordinate substrate. The active-site Proton acceptor is histidine 187.

Belongs to the LDH/MDH superfamily. MDH type 2 family. Homodimer.

It localises to the cytoplasm. The protein localises to the cytosol. It carries out the reaction (S)-malate + NAD(+) = oxaloacetate + NADH + H(+). The enzyme catalyses (S)-2-hydroxyglutarate + NAD(+) = 2-oxoglutarate + NADH + H(+). In terms of biological role, catalyzes the reduction of aromatic alpha-keto acids in the presence of NADH. Plays essential roles in the malate-aspartate shuttle and the tricarboxylic acid cycle, important in mitochondrial NADH supply for oxidative phosphorylation. Catalyzes the reduction of 2-oxoglutarate to 2-hydroxyglutarate, leading to elevated reactive oxygen species (ROS). This Gallus gallus (Chicken) protein is Malate dehydrogenase, cytoplasmic (MDH1).